The chain runs to 417 residues: Serine hydroxymethyltransferase (417 aa).

(6S)-5,6,7,8-tetrahydrofolate-binding positions include leucine 121 and 125–127 (GHL). Lysine 229 is subject to N6-(pyridoxal phosphate)lysine. 355–357 (SPF) provides a ligand contact to (6S)-5,6,7,8-tetrahydrofolate.

It belongs to the SHMT family. As to quaternary structure, homodimer. It depends on pyridoxal 5'-phosphate as a cofactor.

It localises to the cytoplasm. It carries out the reaction (6R)-5,10-methylene-5,6,7,8-tetrahydrofolate + glycine + H2O = (6S)-5,6,7,8-tetrahydrofolate + L-serine. The protein operates within one-carbon metabolism; tetrahydrofolate interconversion. It participates in amino-acid biosynthesis; glycine biosynthesis; glycine from L-serine: step 1/1. Catalyzes the reversible interconversion of serine and glycine with tetrahydrofolate (THF) serving as the one-carbon carrier. This reaction serves as the major source of one-carbon groups required for the biosynthesis of purines, thymidylate, methionine, and other important biomolecules. Also exhibits THF-independent aldolase activity toward beta-hydroxyamino acids, producing glycine and aldehydes, via a retro-aldol mechanism. The protein is Serine hydroxymethyltransferase of Citrobacter koseri (strain ATCC BAA-895 / CDC 4225-83 / SGSC4696).